The following is a 276-amino-acid chain: Acyl-[acyl-carrier-protein]--UDP-N-acetylglucosamine O-acyltransferase (276 aa).

The protein belongs to the transferase hexapeptide repeat family. LpxA subfamily. In terms of assembly, homotrimer.

Its subcellular location is the cytoplasm. It catalyses the reaction a (3R)-hydroxyacyl-[ACP] + UDP-N-acetyl-alpha-D-glucosamine = a UDP-3-O-[(3R)-3-hydroxyacyl]-N-acetyl-alpha-D-glucosamine + holo-[ACP]. The protein operates within glycolipid biosynthesis; lipid IV(A) biosynthesis; lipid IV(A) from (3R)-3-hydroxytetradecanoyl-[acyl-carrier-protein] and UDP-N-acetyl-alpha-D-glucosamine: step 1/6. In terms of biological role, involved in the biosynthesis of lipid A, a phosphorylated glycolipid that anchors the lipopolysaccharide to the outer membrane of the cell. The protein is Acyl-[acyl-carrier-protein]--UDP-N-acetylglucosamine O-acyltransferase of Synechocystis sp. (strain ATCC 27184 / PCC 6803 / Kazusa).